Consider the following 364-residue polypeptide: uncharacterized protein (364 aa).

Residues 1-17 are compositionally biased toward acidic residues; sequence MEPGELMEVDTSQELDE. A disordered region spans residues 1–61; that stretch reads MEPGELMEVD…EEDQSSTETM (61 aa). Basic and acidic residues predominate over residues 19–31; that stretch reads TSAKETDQPKDAQ.

This is an uncharacterized protein from Caenorhabditis elegans.